The following is a 402-amino-acid chain: Thyroid hormone receptor alpha (402 aa).

A disordered region spans residues 1-22 (MEQKPSTLDPLSEPEDTRWLDG). The interval 1-50 (MEQKPSTLDPLSEPEDTRWLDGKRKRKSSQCLVKSSMSGYIPSYLDKDEQ) is modulating. At Ser-12 the chain carries Phosphoserine; by CK2. Ser-28 carries the post-translational modification Phosphoserine. Zn(2+) contacts are provided by Cys-51, Cys-54, Cys-68, Cys-71, Cys-89, Cys-95, Cys-105, and Cys-108. 2 NR C4-type zinc fingers span residues 51–71 (CVVC…CAGC) and 89–113 (CKYD…FKKC). The segment at residues 51–125 (CVVCGDKATG…VGMAMDLVLY (75 aa)) is a DNA-binding region (nuclear receptor). Positions 161 to 402 (EEWELIHVVT…ELFPPLFLEV (242 aa)) constitute an NR LBD domain. 3,3',5-triiodo-L-thyronine-binding residues include Arg-226 and Ser-275.

It belongs to the nuclear hormone receptor family. NR1 subfamily. As to quaternary structure, probably interacts with SFPQ.

The protein resides in the nucleus. Nuclear hormone receptor that can act as a repressor or activator of transcription. High affinity receptor for thyroid hormones, including triiodothyronine and thyroxine. This chain is Thyroid hormone receptor alpha (THRA), found in Pygoscelis adeliae (Adelie penguin).